We begin with the raw amino-acid sequence, 186 residues long: Protein C (186 aa).

A compositionally biased stretch (polar residues) spans 1 to 15 (MSKTDWNASGLSRPS). Positions 1–44 (MSKTDWNASGLSRPSPSAHWPSRKLWQHGQKYQTTQDRSEPPAG) are disordered.

The protein belongs to the morbillivirus protein C family. Interacts with the phosphoprotein (via C-terminus); this interaction allows C to associate with the ribonucleocapsid.

The protein localises to the host nucleus. The protein resides in the host cytoplasmic vesicle. Ribonucleocapsid-associated protein that interacts with the phosphoprotein (P), thereby increasing replication accuracy and processivity of the polymerase complex. The polypeptide is Protein C (P/V/C) (Homo sapiens (Human)).